Here is a 505-residue protein sequence, read N- to C-terminus: Beta-glucosidase 18 (505 aa).

The N-terminal stretch at M1–A26 is a signal peptide. Residue Q46 participates in a beta-D-glucoside binding. Residue N55 is glycosylated (N-linked (GlcNAc...) asparagine). A beta-D-glucoside contacts are provided by residues H148 and N193 to E194. E194 serves as the catalytic Proton donor. The cysteines at positions 213 and 220 are disulfide-linked. Y337 is a binding site for a beta-D-glucoside. Cysteines 345 and 350 form a disulfide. Residues E408, W457, E464 to W465, and F473 contribute to the a beta-D-glucoside site. E408 (nucleophile) is an active-site residue.

It belongs to the glycosyl hydrolase 1 family. In terms of tissue distribution, expressed in roots, leaves, flowers and pollen.

The enzyme catalyses Hydrolysis of terminal, non-reducing beta-D-glucosyl residues with release of beta-D-glucose.. Functionally, hydrolyzes glycosides and monolignol glucosides. Can hydrolyze para-nitrophenyl beta-D-glucopyranoside (pNPGlc) in vitro. Hydrolyzes para-nitrophenyl beta-D-fucopyranoside, para-nitrophenyl beta-D-galactopyranoside and para-nitrophenyl beta-D-xylopyranoside in vitro. Hydrolyzes the monolignol glucosides coniferin and syringin with high catalytic efficiencies. This is Beta-glucosidase 18 from Oryza sativa subsp. japonica (Rice).